The sequence spans 126 residues: Histone H2B type 1-B (126 aa).

The span at 1–12 (MPEPSKSAPAPK) shows a compositional bias: low complexity. Positions 1–35 (MPEPSKSAPAPKKGSKKAITKAQKKDGKKRKRSRK) are disordered. The residue at position 2 (Pro-2) is an N-acetylproline. At Glu-3 the chain carries ADP-ribosyl glutamic acid. Residue Lys-6 is modified to N6-(2-hydroxyisobutyryl)lysine; alternate. Lys-6 is modified (N6-(beta-hydroxybutyryl)lysine; alternate). N6-acetyllysine; alternate is present on Lys-6. At Lys-6 the chain carries N6-butyryllysine; alternate. Lys-6 bears the N6-crotonyllysine; alternate mark. Lys-6 bears the N6-lactoyllysine; alternate mark. Lys-6 participates in a covalent cross-link: Glycyl lysine isopeptide (Lys-Gly) (interchain with G-Cter in SUMO2); alternate. Ser-7 is modified (ADP-ribosylserine). The residue at position 12 (Lys-12) is an N6-(beta-hydroxybutyryl)lysine; alternate. Residues Lys-12 and Lys-13 each carry the N6-acetyllysine; alternate modification. An N6-crotonyllysine; alternate mark is found at Lys-12 and Lys-13. Lys-12 bears the N6-lactoyllysine; alternate mark. The residue at position 13 (Lys-13) is an N6-(2-hydroxyisobutyryl)lysine; alternate. Ser-15 carries the post-translational modification Phosphoserine; by STK4/MST1. Lys-16, Lys-17, Lys-21, and Lys-24 each carry N6-acetyllysine; alternate. 4 positions are modified to N6-crotonyllysine; alternate: Lys-16, Lys-17, Lys-21, and Lys-24. An N6-lactoyllysine; alternate mark is found at Lys-16, Lys-17, Lys-21, and Lys-24. Residues Lys-17 and Lys-21 each carry the N6-(beta-hydroxybutyryl)lysine; alternate modification. Lys-17 bears the N6-glutaryllysine; alternate mark. Residues Lys-21 and Lys-24 each carry the N6-(2-hydroxyisobutyryl)lysine; alternate modification. Lys-21 carries the N6-butyryllysine; alternate modification. Lys-21 is covalently cross-linked (Glycyl lysine isopeptide (Lys-Gly) (interchain with G-Cter in SUMO2); alternate). Lys-25 carries the post-translational modification N6-(2-hydroxyisobutyryl)lysine. Lys-35 is modified (N6-(2-hydroxyisobutyryl)lysine; alternate). N6-(beta-hydroxybutyryl)lysine; alternate is present on Lys-35. Lys-35 is modified (N6-crotonyllysine; alternate). Lys-35 is modified (N6-glutaryllysine; alternate). Lys-35 carries the post-translational modification N6-succinyllysine; alternate. A Glycyl lysine isopeptide (Lys-Gly) (interchain with G-Cter in ubiquitin); alternate cross-link involves residue Lys-35. Residue Glu-36 is modified to PolyADP-ribosyl glutamic acid. Ser-37 is subject to Phosphoserine; by AMPK. Residues Lys-44, Lys-47, and Lys-58 each carry the N6-(2-hydroxyisobutyryl)lysine; alternate modification. The residue at position 44 (Lys-44) is an N6-lactoyllysine; alternate. N6-glutaryllysine; alternate is present on residues Lys-44 and Lys-47. The residue at position 47 (Lys-47) is an N6-methyllysine; alternate. N6,N6-dimethyllysine; alternate is present on Lys-58. Position 80 is a dimethylated arginine (Arg-80). At Lys-86 the chain carries N6-(2-hydroxyisobutyryl)lysine; alternate. Position 86 is an N6-(beta-hydroxybutyryl)lysine; alternate (Lys-86). An N6-acetyllysine; alternate modification is found at Lys-86. Position 86 is an N6-lactoyllysine; alternate (Lys-86). N6,N6,N6-trimethyllysine; alternate is present on Lys-86. 2 positions are modified to omega-N-methylarginine: Arg-87 and Arg-93. At Lys-109 the chain carries N6-(2-hydroxyisobutyryl)lysine; alternate. At Lys-109 the chain carries N6-lactoyllysine; alternate. Position 109 is an N6-glutaryllysine; alternate (Lys-109). At Lys-109 the chain carries N6-methyllysine; alternate. Ser-113 carries O-linked (GlcNAc) serine glycosylation. Residue Thr-116 is modified to Phosphothreonine. N6-(2-hydroxyisobutyryl)lysine; alternate is present on residues Lys-117 and Lys-121. N6-(beta-hydroxybutyryl)lysine; alternate is present on residues Lys-117 and Lys-121. An N6-lactoyllysine; alternate mark is found at Lys-117 and Lys-121. 2 positions are modified to N6-glutaryllysine; alternate: Lys-117 and Lys-121. N6-succinyllysine; alternate is present on residues Lys-117 and Lys-121. The residue at position 117 (Lys-117) is an N6-malonyllysine; alternate. Lys-117 carries the post-translational modification N6-methylated lysine; alternate. Lys-121 participates in a covalent cross-link: Glycyl lysine isopeptide (Lys-Gly) (interchain with G-Cter in ubiquitin); alternate.

This sequence belongs to the histone H2B family. The nucleosome is a histone octamer containing two molecules each of H2A, H2B, H3 and H4 assembled in one H3-H4 heterotetramer and two H2A-H2B heterodimers. The octamer wraps approximately 147 bp of DNA. Post-translationally, monoubiquitination at Lys-35 (H2BK34Ub) by the MSL1/MSL2 dimer is required for histone H3 'Lys-4' (H3K4me) and 'Lys-79' (H3K79me) methylation and transcription activation at specific gene loci, such as HOXA9 and MEIS1 loci. Similarly, monoubiquitination at Lys-121 (H2BK120Ub) by the RNF20/40 complex gives a specific tag for epigenetic transcriptional activation and is also prerequisite for histone H3 'Lys-4' and 'Lys-79' methylation. It also functions cooperatively with the FACT dimer to stimulate elongation by RNA polymerase II. H2BK120Ub also acts as a regulator of mRNA splicing: deubiquitination by USP49 is required for efficient cotranscriptional splicing of a large set of exons. Phosphorylation at Ser-37 (H2BS36ph) by AMPK in response to stress promotes transcription. Phosphorylated on Ser-15 (H2BS14ph) by STK4/MST1 during apoptosis; which facilitates apoptotic chromatin condensation. Also phosphorylated on Ser-15 in response to DNA double strand breaks (DSBs), and in correlation with somatic hypermutation and immunoglobulin class-switch recombination. In terms of processing, glcNAcylation at Ser-113 promotes monoubiquitination of Lys-121. It fluctuates in response to extracellular glucose, and associates with transcribed genes. Post-translationally, ADP-ribosylated by PARP1 or PARP2 on Ser-7 (H2BS6ADPr) in response to DNA damage. H2BS6ADPr promotes recruitment of CHD1L. Mono-ADP-ribosylated on Glu-3 (H2BE2ADPr) by PARP3 in response to single-strand breaks. Poly ADP-ribosylation on Glu-36 (H2BE35ADPr) by PARP1 regulates adipogenesis: it inhibits phosphorylation at Ser-37 (H2BS36ph), thereby blocking expression of pro-adipogenetic genes. Crotonylation (Kcr) is specifically present in male germ cells and marks testis-specific genes in post-meiotic cells, including X-linked genes that escape sex chromosome inactivation in haploid cells. Crotonylation marks active promoters and enhancers and confers resistance to transcriptional repressors. It is also associated with post-meiotically activated genes on autosomes. In terms of processing, lactylated in macrophages by EP300/P300 by using lactoyl-CoA directly derived from endogenous or exogenous lactate, leading to stimulates gene transcription.

Its subcellular location is the nucleus. It is found in the chromosome. Functionally, core component of nucleosome. Nucleosomes wrap and compact DNA into chromatin, limiting DNA accessibility to the cellular machineries which require DNA as a template. Histones thereby play a central role in transcription regulation, DNA repair, DNA replication and chromosomal stability. DNA accessibility is regulated via a complex set of post-translational modifications of histones, also called histone code, and nucleosome remodeling. The sequence is that of Histone H2B type 1-B from Homo sapiens (Human).